The primary structure comprises 1576 residues: Proton channel OtopLc (1576 aa).

2 disordered regions span residues 1-602 and 621-736; these read MDSS…SSPP and QIGS…SSPV. Composition is skewed to low complexity over residues 58 to 67 and 76 to 85; these read SLAEEVLLLV and LLGQPLPTLT. Acidic residues-rich tracts occupy residues 103–116, 159–171, 186–198, and 206–216; these read DEGDDEDEREEPVP, DDGEGEETDDAEE, SNPDEEEEEEEQE, and PKEEDEEEDDD. Residues 219–228 show a composition bias toward pro residues; that stretch reads TPPPPLPPLP. Residues 229–241 are compositionally biased toward polar residues; the sequence is SNFSYVQGHNLGQ. Asn-230 carries an N-linked (GlcNAc...) asparagine glycan. The span at 243–252 shows a compositional bias: low complexity; the sequence is TPPLTKSPSN. Residues 253–264 show a composition bias toward pro residues; the sequence is SPSPPVTPPPCP. Residue Asn-267 is glycosylated (N-linked (GlcNAc...) asparagine). The span at 316–341 shows a compositional bias: acidic residues; that stretch reads DQPEPEDQPPEPENEPEPEPEPEPEP. Over residues 347-356 the composition is skewed to basic and acidic residues; that stretch reads AREDYSRSLD. Over residues 362–376 the composition is skewed to polar residues; that stretch reads TTITTPPSNGYSASS. The span at 384 to 393 shows a compositional bias: basic and acidic residues; it reads HFAELDEDRG. The segment covering 402–419 has biased composition (acidic residues); it reads QEPEEEVEEEEEEEEEEL. Residues 420–433 show a composition bias toward basic and acidic residues; that stretch reads TKETDEISVDRESL. The segment covering 434–457 has biased composition (polar residues); it reads QDQGGDSISSPRPASILTGSISTS. Low complexity predominate over residues 465 to 507; sequence SPKPESRGPSRSGSQRSQLRSGSQQGSIAESRGGSRIGSRTGS. Composition is skewed to polar residues over residues 519 to 534 and 545 to 555; these read PQASLKSQTSIRSQGQ and KSGSQRMQSPQ. Residues 563-575 are compositionally biased toward pro residues; the sequence is MPSPPLMRSPPPE. Residues 661 to 685 are compositionally biased toward low complexity; it reads AAAAPAVTTTAATTAVTSQPRSHFT. Positions 686 to 709 are enriched in basic residues; sequence SSHHHYHLPHQFQHPHHQNHHTHS. Residues 741–761 traverse the membrane as a helical segment; it reads LFMAGVAPPIAAGAGSLMAMP. The interval 771–845 is disordered; that stretch reads GRVSARSGSQ…GSSSQPALSG (75 aa). Residues 776–799 are compositionally biased toward polar residues; that stretch reads RSGSQHHVTIDESSLPSHKGNIQE. Positions 826–839 are enriched in low complexity; that stretch reads DSSDPPSSPGGSSS. Transmembrane regions (helical) follow at residues 891 to 911 and 931 to 951; these read ALATLFSALYGKLLVVMGIAF and LYLYIGSMIFLLFMYATLIWG. Over residues 962–973 the composition is skewed to polar residues; it reads PSKSATKASGTD. A disordered region spans residues 962–1001; sequence PSKSATKASGTDSMDESDTDSNSVHHRLPPPIPVRRPSLL. A run of 3 helical transmembrane segments spans residues 1019 to 1039, 1051 to 1071, and 1084 to 1104; these read GAVAFGIGSMIYSGLEFGQYF, LLALTPATRMAFIFIQMYFIF, and IIARFGLMHMIGTNLAVWLNV. The N-linked (GlcNAc...) asparagine glycan is linked to Asn-1121. 7 helical membrane passes run 1179–1199, 1239–1259, 1272–1292, 1310–1330, 1340–1360, 1381–1401, and 1412–1432; these read FLFPCTIEYSLICAAILYVMW, FVGILILVLTIISLIIFFVLI, VTICELLIYGTATIATLVGMI, ILLVGAQTGSFLYNIFTVIAG, LVPINALASIVQTACQTMFIL, IVTFMLVVNLAMWAISTLEKS, and FYGLWAWTIITHVSMPLAIFY. Asn-1479 is a glycosylation site (N-linked (GlcNAc...) asparagine). The disordered stretch occupies residues 1498 to 1549; that stretch reads EEVDSGESNSAEDAGAGAGSGGSRGSGGGAGAAEAGEAGEEGQQGGDSSCGL. Residues 1503 to 1512 show a composition bias toward low complexity; it reads GESNSAEDAG. The span at 1513-1528 shows a compositional bias: gly residues; sequence AGAGSGGSRGSGGGAG.

It belongs to the otopetrin family.

It is found in the cell membrane. Functionally, proton-selective channel that specifically transports protons into cells. Proton-selective channel activity is probably required in cell types that use changes in intracellular pH for cell signaling or to regulate biochemical or developmental processes. In Drosophila melanogaster (Fruit fly), this protein is Proton channel OtopLc.